We begin with the raw amino-acid sequence, 218 residues long: Small ribosomal subunit protein uS3c (218 aa).

The KH type-2 domain maps to V47–A118.

The protein belongs to the universal ribosomal protein uS3 family. Part of the 30S ribosomal subunit.

It localises to the plastid. It is found in the chloroplast. This Amborella trichopoda protein is Small ribosomal subunit protein uS3c (rps3).